Reading from the N-terminus, the 955-residue chain is Reversion-inducing cysteine-rich protein with Kazal motifs (955 aa).

The first 22 residues, 1-22, serve as a signal peptide directing secretion; that stretch reads MSGCLQILTVLLCCRFWALVFS. The stretch at 28-75 is one Knot 1 repeat; it reads CVHHAADIPRCRDACEQLASIRSESRLRHLLHRLPSYCPETLSELWIC. A 5 X Knot repeats region spans residues 28–326; that stretch reads CVHHAADIPR…NPVEMDLITC (299 aa). N-linked (GlcNAc...) asparagine glycosylation occurs at Asn-77. Knot repeat units lie at residues 95–132 and 142–188; these read CCEL…LYSC and CCSY…LILC. The N-linked (GlcNAc...) asparagine glycan is linked to Asn-191. Knot repeat units lie at residues 207 to 254 and 282 to 326; these read CCDR…LWQC and CCFK…LITC. Residues Asn-287 and Asn-375 are each glycosylated (N-linked (GlcNAc...) asparagine). Kazal-like domains lie at 615-661, 686-741, and 742-778; these read LFTG…SCRS, DLSE…HCQD, and ACRR…RCHA. Intrachain disulfides connect Cys-621–Cys-646, Cys-623–Cys-642, Cys-631–Cys-659, Cys-704–Cys-724, and Cys-713–Cys-739. The GPI-anchor amidated serine moiety is linked to residue Ser-931. Positions 932-955 are excised as a propeptide; it reads SCVSISVCVLLLLCSLILTLTSDL.

Belongs to the RECK family. In terms of assembly, interacts (via knot repeats) with wnt7a (via disordered linker region); the interaction is direct. Interacts (via knot repeats) with wnt7b (via disordered linker region); the interaction is direct. Interacts with adgra2; the interaction is direct. In terms of tissue distribution, expressed in the cerebral endothelium.

The protein localises to the cell membrane. In terms of biological role, functions together with adgra2 to enable brain endothelial cells to selectively respond to Wnt7 signals (wnt7a or wnt7b). Plays a key role in Wnt7-specific responses: required for central nervous system (CNS) angiogenesis and blood-brain barrier regulation. Acts as a Wnt7-specific coactivator of canonical Wnt signaling by decoding Wnt ligands: acts by interacting specifically with the disordered linker region of Wnt7, thereby conferring ligand selectivity for Wnt7. Adgra2 is then required to deliver reck-bound Wnt7 to frizzled by assembling a higher-order RECK-ADGRA2-Fzd-LRP5-LRP6 complex. Also acts as a serine protease inhibitor. In Danio rerio (Zebrafish), this protein is Reversion-inducing cysteine-rich protein with Kazal motifs.